A 235-amino-acid chain; its full sequence is Casparian strip membrane protein 2 (235 aa).

Residues 1–46 (MSGSDTSGSVHVDEHGHGKASSSYDGAGAPAPAPAPFQGHRKAGSG) form a disordered region. Topologically, residues 1–67 (MSGSDTSGSV…GSGGDGLRRC (67 aa)) are cytoplasmic. The chain crosses the membrane as a helical span at residues 68-88 (LGLIDFVLRVAAFGPTLAAAI). Residues 89-115 (SIGTSDERLSVFTNYFQFRARFDDFPA) are Extracellular-facing. Residues 116–136 (FEFFIVANAIAAGYMVLSLPF) traverse the membrane as a helical segment. The Cytoplasmic portion of the chain corresponds to 137 to 150 (SAATIMSSKATGVK). The chain crosses the membrane as a helical span at residues 151 to 171 (LLLLICDTIMVGLLTAAASAA). Over 172–203 (AAMVYVAHEGNLRANWVPICLQFHGFCQRTSG) the chain is Extracellular. A helical membrane pass occupies residues 204-224 (AVIASFLAVFVLMVLIVMAAF). Over 225 to 235 (TMPRRTHHTAS) the chain is Cytoplasmic.

The protein belongs to the Casparian strip membrane proteins (CASP) family. As to quaternary structure, homodimer and heterodimers.

The protein resides in the cell membrane. Its function is as follows. Regulates membrane-cell wall junctions and localized cell wall deposition. Required for establishment of the Casparian strip membrane domain (CSD) and the subsequent formation of Casparian strips, a cell wall modification of the root endodermis that determines an apoplastic barrier between the intraorganismal apoplasm and the extraorganismal apoplasm and prevents lateral diffusion. This Oryza sativa subsp. indica (Rice) protein is Casparian strip membrane protein 2.